A 262-amino-acid chain; its full sequence is Octanoyltransferase (262 aa).

The BPL/LPL catalytic domain occupies 41-232; it reads PQLPDGLLLL…SFCQVFGLQA (192 aa). Residues 96-103, 163-165, and 176-178 contribute to the substrate site; these read RGGEVTYH, AIG, and GFA. Residue Cys194 is the Acyl-thioester intermediate of the active site.

It belongs to the LipB family.

It localises to the cytoplasm. The enzyme catalyses octanoyl-[ACP] + L-lysyl-[protein] = N(6)-octanoyl-L-lysyl-[protein] + holo-[ACP] + H(+). Its pathway is protein modification; protein lipoylation via endogenous pathway; protein N(6)-(lipoyl)lysine from octanoyl-[acyl-carrier-protein]: step 1/2. Its function is as follows. Catalyzes the transfer of endogenously produced octanoic acid from octanoyl-acyl-carrier-protein onto the lipoyl domains of lipoate-dependent enzymes. Lipoyl-ACP can also act as a substrate although octanoyl-ACP is likely to be the physiological substrate. The chain is Octanoyltransferase from Synechococcus sp. (strain JA-2-3B'a(2-13)) (Cyanobacteria bacterium Yellowstone B-Prime).